Reading from the N-terminus, the 479-residue chain is Anaerobic nitric oxide reductase flavorubredoxin (479 aa).

A zinc metallo-hydrolase region spans residues 30-210; the sequence is LRGSSYNSYL…PFSRLVTPKI (181 aa). Residues His-79, Glu-81, Asp-83, His-147, Asp-166, and His-227 each contribute to the Fe cation site. A Flavodoxin-like domain is found at 254–393; sequence ITIFYDTMSN…LCREHGREIA (140 aa). FMN-binding positions include 260–264 and 342–369; these read TMSNN and AFGS…EMSL. A Rubredoxin-like domain is found at 423–474; that stretch reads GPRMQCSVCQWIYDPAKGEPMQDVAPGTPWSEVPDNFLCPECSLGKDVFDEL. Residues Cys-428, Cys-431, Cys-461, and Cys-464 each contribute to the Fe cation site.

The protein in the N-terminal section; belongs to the zinc metallo-hydrolase group 3 family. As to quaternary structure, homotetramer. The cofactor is Fe cation. Requires FMN as cofactor.

The protein localises to the cytoplasm. It participates in nitrogen metabolism; nitric oxide reduction. Anaerobic nitric oxide reductase; uses NADH to detoxify nitric oxide (NO), protecting several 4Fe-4S NO-sensitive enzymes. Has at least 2 reductase partners, only one of which (NorW, flavorubredoxin reductase) has been identified. NO probably binds to the di-iron center; electrons enter from the NorW at rubredoxin and are transferred sequentially to the FMN center and the di-iron center. Also able to function as an aerobic oxygen reductase. The protein is Anaerobic nitric oxide reductase flavorubredoxin of Escherichia coli O6:H1 (strain CFT073 / ATCC 700928 / UPEC).